Reading from the N-terminus, the 252-residue chain is Autophagy-related protein 27 (252 aa).

Residues 1-15 (MILASLLTFATAALA) form the signal peptide. The region spanning 16 to 161 (FDCSDKELER…SMKTKAACIT (146 aa)) is the MRH domain. The Lumenal portion of the chain corresponds to 16–176 (FDCSDKELER…KKEKHDNGES (161 aa)). Cystine bridges form between C18/C57, C66/C73, and C130/C159. An N-linked (GlcNAc...) asparagine glycan is attached at N49. A helical membrane pass occupies residues 177–197 (WGWFTWIFIFLVLFLSIYIIG). At 198–252 (GAWFQYNKGNAIDFQSALKEVVENFIELLKGLPSFGKEIIEKFTGRSNRGEYSAV) the chain is on the cytoplasmic side.

It belongs to the ATG27 family.

Its subcellular location is the cytoplasmic vesicle membrane. It is found in the golgi apparatus membrane. The protein localises to the mitochondrion membrane. The protein resides in the preautophagosomal structure membrane. Its function is as follows. Plays a key role in autophagy. Effector of VPS34 phosphatidylinositol 3-phosphate kinase signaling. Regulates the cytoplasm to vacuole transport (Cvt) vesicle formation. Plays a role in ATG protein retrieval from the pre-autophagosomal structure (PAS) and is especially required for autophagy-dependent cycling of ATG9. Finally, plays an important role in biofilm formation and resistance to antifungal compounds such as fluconazole, itraconazole, terbinafine and caspofungin. This chain is Autophagy-related protein 27, found in Candida albicans (strain SC5314 / ATCC MYA-2876) (Yeast).